The chain runs to 318 residues: Nucleotide-binding protein Lcho_3490 (318 aa).

35–42 (GISGGGKS) serves as a coordination point for ATP. 84–87 (DVRN) serves as a coordination point for GTP.

This sequence belongs to the RapZ-like family.

Its function is as follows. Displays ATPase and GTPase activities. In Leptothrix cholodnii (strain ATCC 51168 / LMG 8142 / SP-6) (Leptothrix discophora (strain SP-6)), this protein is Nucleotide-binding protein Lcho_3490.